A 340-amino-acid chain; its full sequence is UDP-3-O-acylglucosamine N-acyltransferase (340 aa).

H238 functions as the Proton acceptor in the catalytic mechanism.

Belongs to the transferase hexapeptide repeat family. LpxD subfamily. In terms of assembly, homotrimer.

It catalyses the reaction a UDP-3-O-[(3R)-3-hydroxyacyl]-alpha-D-glucosamine + a (3R)-hydroxyacyl-[ACP] = a UDP-2-N,3-O-bis[(3R)-3-hydroxyacyl]-alpha-D-glucosamine + holo-[ACP] + H(+). It functions in the pathway bacterial outer membrane biogenesis; LPS lipid A biosynthesis. In terms of biological role, catalyzes the N-acylation of UDP-3-O-acylglucosamine using 3-hydroxyacyl-ACP as the acyl donor. Is involved in the biosynthesis of lipid A, a phosphorylated glycolipid that anchors the lipopolysaccharide to the outer membrane of the cell. This Shewanella frigidimarina (strain NCIMB 400) protein is UDP-3-O-acylglucosamine N-acyltransferase.